A 296-amino-acid chain; its full sequence is Glycine--tRNA ligase alpha subunit (296 aa).

The protein belongs to the class-II aminoacyl-tRNA synthetase family. Tetramer of two alpha and two beta subunits.

It localises to the cytoplasm. It catalyses the reaction tRNA(Gly) + glycine + ATP = glycyl-tRNA(Gly) + AMP + diphosphate. The chain is Glycine--tRNA ligase alpha subunit from Polynucleobacter necessarius subsp. necessarius (strain STIR1).